The following is a 440-amino-acid chain: GTPase Der (440 aa).

2 EngA-type G domains span residues 3–167 (PIIA…PYDR) and 176–351 (TRIA…EQYC). Residues 9–16 (GRPNVGKS), 56–60 (DTGGF), 119–122 (NKVD), 182–189 (GRPNVGKS), 229–233 (DTAGI), and 294–297 (NKWD) contribute to the GTP site. Residues 352–436 (KRVTTGELNR…PLKLIFRGRD (85 aa)) enclose the KH-like domain.

The protein belongs to the TRAFAC class TrmE-Era-EngA-EngB-Septin-like GTPase superfamily. EngA (Der) GTPase family. In terms of assembly, associates with the 50S ribosomal subunit.

Its function is as follows. GTPase that plays an essential role in the late steps of ribosome biogenesis. This is GTPase Der from Citrifermentans bemidjiense (strain ATCC BAA-1014 / DSM 16622 / JCM 12645 / Bem) (Geobacter bemidjiensis).